The following is a 177-amino-acid chain: Bifunctional protein PyrR (177 aa).

Residues 99–111 carry the PRPP-binding motif; the sequence is VILIDDVLYTGRT.

The protein belongs to the purine/pyrimidine phosphoribosyltransferase family. PyrR subfamily. In terms of assembly, homodimer and homohexamer; in equilibrium.

It carries out the reaction UMP + diphosphate = 5-phospho-alpha-D-ribose 1-diphosphate + uracil. Functionally, regulates transcriptional attenuation of the pyrimidine nucleotide (pyr) operon by binding in a uridine-dependent manner to specific sites on pyr mRNA. This disrupts an antiterminator hairpin in the RNA and favors formation of a downstream transcription terminator, leading to a reduced expression of downstream genes. In terms of biological role, also displays a weak uracil phosphoribosyltransferase activity which is not physiologically significant. The protein is Bifunctional protein PyrR of Pediococcus pentosaceus (strain ATCC 25745 / CCUG 21536 / LMG 10740 / 183-1w).